A 306-amino-acid polypeptide reads, in one-letter code: Uracil phosphoribosyltransferase homolog (306 aa).

Disordered regions lie at residues 1–28 (MATE…NPEP) and 58–87 (SSVP…NYDA). 2 stretches are compositionally biased toward polar residues: residues 13 to 28 (CHNQ…NPEP) and 70 to 79 (GGATFNSENN). Residues Arg130, Arg139, and 173–176 (EKGN) each bind GTP. Arg183 is a 5-phospho-alpha-D-ribose 1-diphosphate binding site. Positions 200 and 229 each coordinate GTP. A 5-phospho-alpha-D-ribose 1-diphosphate-binding site is contributed by 235–243 (YPILSTGNT). 296-298 (THF) is a binding site for uracil.

This sequence belongs to the UPRTase family.

Its subcellular location is the cytoplasm. It localises to the nucleus. The chain is Uracil phosphoribosyltransferase homolog (UPRT) from Bos taurus (Bovine).